Reading from the N-terminus, the 875-residue chain is Kelch-like protein 29 (875 aa).

Positions 113–126 (IRWGQTPVNQSTPW) are enriched in polar residues. Disordered stretches follow at residues 113 to 145 (IRWG…PGTG) and 240 to 291 (GVGQ…DSAH). Basic and acidic residues predominate over residues 131-140 (PPSKQMRESD). A compositionally biased stretch (low complexity) spans 270–280 (PSAALPSSVPA). Positions 329–401 (TDLKIVVEGR…VYTGSLVIDS (73 aa)) constitute a BTB domain. Kelch repeat units lie at residues 585-635 (VIVL…VSAG), 637-683 (NIYL…VYDG), 684-730 (KIYT…VCGG), 732-778 (IYVF…TLNG), 779-821 (FVFI…VLDG), and 822-870 (KIYA…VIKK).

This is Kelch-like protein 29 (Klhl29) from Mus musculus (Mouse).